Reading from the N-terminus, the 238-residue chain is Large ribosomal subunit protein uL1 (238 aa).

This sequence belongs to the universal ribosomal protein uL1 family. In terms of assembly, part of the 50S ribosomal subunit.

Its function is as follows. Binds directly to 23S rRNA. The L1 stalk is quite mobile in the ribosome, and is involved in E site tRNA release. Functionally, protein L1 is also a translational repressor protein, it controls the translation of the L11 operon by binding to its mRNA. This Frankia casuarinae (strain DSM 45818 / CECT 9043 / HFP020203 / CcI3) protein is Large ribosomal subunit protein uL1.